The primary structure comprises 244 residues: Ribosomal RNA large subunit methyltransferase E (244 aa).

S-adenosyl-L-methionine contacts are provided by Gly-81, Trp-83, Asp-109, Asp-125, and Asp-149. Residue Lys-189 is the Proton acceptor of the active site.

The protein belongs to the class I-like SAM-binding methyltransferase superfamily. RNA methyltransferase RlmE family.

It localises to the cytoplasm. The enzyme catalyses uridine(2552) in 23S rRNA + S-adenosyl-L-methionine = 2'-O-methyluridine(2552) in 23S rRNA + S-adenosyl-L-homocysteine + H(+). Functionally, specifically methylates the uridine in position 2552 of 23S rRNA at the 2'-O position of the ribose in the fully assembled 50S ribosomal subunit. This is Ribosomal RNA large subunit methyltransferase E from Cereibacter sphaeroides (strain ATCC 17029 / ATH 2.4.9) (Rhodobacter sphaeroides).